We begin with the raw amino-acid sequence, 157 residues long: UPF0212 protein rrnAC1165 (157 aa).

The interval 105-157 (VLEIEEIPEESDETTEDESSSAESEADADDPPSDQSADESDDVLPEFEELIDE) is disordered. Residues 106-157 (LEIEEIPEESDETTEDESSSAESEADADDPPSDQSADESDDVLPEFEELIDE) show a composition bias toward acidic residues.

Belongs to the UPF0212 family.

The protein is UPF0212 protein rrnAC1165 of Haloarcula marismortui (strain ATCC 43049 / DSM 3752 / JCM 8966 / VKM B-1809) (Halobacterium marismortui).